Consider the following 366-residue polypeptide: Beta sliding clamp (366 aa).

Belongs to the beta sliding clamp family. Forms a ring-shaped head-to-tail homodimer around DNA which binds and tethers DNA polymerases and other proteins to the DNA. The DNA replisome complex has a single clamp-loading complex (3 tau and 1 each of delta, delta', psi and chi subunits) which binds 3 Pol III cores (1 core on the leading strand and 2 on the lagging strand) each with a beta sliding clamp dimer. Additional proteins in the replisome are other copies of gamma, psi and chi, Ssb, DNA helicase and RNA primase.

The protein localises to the cytoplasm. In terms of biological role, confers DNA tethering and processivity to DNA polymerases and other proteins. Acts as a clamp, forming a ring around DNA (a reaction catalyzed by the clamp-loading complex) which diffuses in an ATP-independent manner freely and bidirectionally along dsDNA. Initially characterized for its ability to contact the catalytic subunit of DNA polymerase III (Pol III), a complex, multichain enzyme responsible for most of the replicative synthesis in bacteria; Pol III exhibits 3'-5' exonuclease proofreading activity. The beta chain is required for initiation of replication as well as for processivity of DNA replication. This is Beta sliding clamp (dnaN) from Buchnera aphidicola subsp. Rhopalosiphum padi.